The chain runs to 161 residues: UPF0262 protein mll6455 (161 aa).

Belongs to the UPF0262 family.

The chain is UPF0262 protein mll6455 from Mesorhizobium japonicum (strain LMG 29417 / CECT 9101 / MAFF 303099) (Mesorhizobium loti (strain MAFF 303099)).